The primary structure comprises 307 residues: Elongation factor Ts (307 aa).

The involved in Mg(2+) ion dislocation from EF-Tu stretch occupies residues 79 to 82; it reads TDFV.

Belongs to the EF-Ts family.

It localises to the cytoplasm. Its function is as follows. Associates with the EF-Tu.GDP complex and induces the exchange of GDP to GTP. It remains bound to the aminoacyl-tRNA.EF-Tu.GTP complex up to the GTP hydrolysis stage on the ribosome. The protein is Elongation factor Ts of Rhizobium meliloti (strain 1021) (Ensifer meliloti).